A 530-amino-acid chain; its full sequence is MGNCCGTAGSLIQDKQKKGFKLPNPFSNEYGNHHDGLKLIVLKEPTGHEIKQKYKLGRELGRGEFGVTYLCTEIETGEIFACKSILKKKLKTSIDIEDVKREVEIMRQMPEHPNIVTLKETYEDDKAVHLVMELCEGGELFDRIVARGHYTERAAASVIKTIIEVVQMCHKHGVMHRDLKPENFLFANKKETASLKAIDFGLSVFFKPGERFNEIVGSPYYMAPEVLRRSYGQEIDIWSAGVILYILLCGVPPFWAETEHGVAKAILKSVIDFKRDPWPKVSDNAKDLIKKMLHPDPRRRLTAQQVLDHPWIQNGKNASNVSLGETVRARLKQFSVMNKLKKRALRVIAEHLSVEETSCIKERFQVMDTSNRGKITITELGIGLQKLGIVVPQDDIQILMDAGDVDKDGYLDVNEFVAISVHIRKLGNDEHLKKAFTFFDKNKSGYIEIEELRDALADDVDTTSEEVVEAIILDVDTNKDGKISYDEFATMMKTGTDWRKASRQYSRDLFKCLSLKLMQDGSLQSNGDTK.

Residue G2 is the site of N-myristoyl glycine attachment. In terms of domain architecture, Protein kinase spans 54 to 312; the sequence is YKLGRELGRG…AQQVLDHPWI (259 aa). ATP-binding positions include 60 to 68 and K83; that span reads LGRGEFGVT. Catalysis depends on D178, which acts as the Proton acceptor. A Phosphoserine modification is found at S218. The interval 318–348 is autoinhibitory domain; the sequence is ASNVSLGETVRARLKQFSVMNKLKKRALRVI. 4 consecutive EF-hand domains span residues 355–390, 391–426, 427–462, and 463–498; these read EETSCIKERFQVMDTSNRGKITITELGIGLQKLGIV, VPQDDIQILMDAGDVDKDGYLDVNEFVAISVHIRKL, GNDEHLKKAFTFFDKNKSGYIEIEELRDALADDVDT, and TSEEVVEAIILDVDTNKDGKISYDEFATMMKTGTDW. Residues D368, S370, K374, E379, D404, D406, D408, Y410, E415, D440, N442, S444, Y446, E451, D476, N478, D480, and K482 each coordinate Ca(2+). At S484 the chain carries Phosphoserine. E487 is a Ca(2+) binding site.

The protein belongs to the protein kinase superfamily. Ser/Thr protein kinase family. CDPK subfamily.

The protein localises to the membrane. It catalyses the reaction L-seryl-[protein] + ATP = O-phospho-L-seryl-[protein] + ADP + H(+). The catalysed reaction is L-threonyl-[protein] + ATP = O-phospho-L-threonyl-[protein] + ADP + H(+). Its activity is regulated as follows. Activated by calcium. Autophosphorylation may play an important role in the regulation of the kinase activity. Functionally, may play a role in signal transduction pathways that involve calcium as a second messenger. This chain is Calcium-dependent protein kinase 14 (CPK14), found in Arabidopsis thaliana (Mouse-ear cress).